The chain runs to 603 residues: DNA mismatch repair protein MutL (603 aa).

The protein belongs to the DNA mismatch repair MutL/HexB family.

This protein is involved in the repair of mismatches in DNA. It is required for dam-dependent methyl-directed DNA mismatch repair. May act as a 'molecular matchmaker', a protein that promotes the formation of a stable complex between two or more DNA-binding proteins in an ATP-dependent manner without itself being part of a final effector complex. The polypeptide is DNA mismatch repair protein MutL (Sphingopyxis alaskensis (strain DSM 13593 / LMG 18877 / RB2256) (Sphingomonas alaskensis)).